A 490-amino-acid polypeptide reads, in one-letter code: MVPVVALVGRPNVGKSTLFNRLTRTRDALVADFPGLTRDRKYGRAEVEGREFICIDTGGIDGTEDGVETRMAEQSLLAIEEADVVLFMVDARAGLMPADEAIAKHLRSREKPTFLVANKTDGLDPDQAVVDFYSLGLGEIYPIAASHGRGVLSLLEHVLLPWMDDVAPQEEVDEDAEYWAQFEVEQNGEEAPEDDFDPQSLPIKLAIVGRPNVGKSTLTNRILGEERVVVYDMPGTTRDSIYIPMERDEREYVLIDTAGVRKRGKITDAVEKFSVIKTLQAIEDANVVLLVIDAREGISDQDLSLLGFILNSGRSLVIVVNKWDGLSQEVKEQVKETLDFRLGFIDFARVHFISALHGSGVGNLFESVREAYDSSTRRVSTAMLTRIMTMAVEDHQPPLVRGRRVKLKYAHAGGYNPPIVVIHGNQVKDLPDSYKRYLMNYFRKSLEVMGTPIRIQFKEGENPYANKRNTLTPTQMRKRKRLMKHIKKSK.

2 consecutive EngA-type G domains span residues 3–166 (PVVA…MDDV) and 203–376 (IKLA…DSST). Residues 9 to 16 (GRPNVGKS), 56 to 60 (DTGGI), 118 to 121 (NKTD), 209 to 216 (GRPNVGKS), 256 to 260 (DTAGV), and 321 to 324 (NKWD) each bind GTP. A KH-like domain is found at 377–461 (RRVSTAMLTR…PIRIQFKEGE (85 aa)).

This sequence belongs to the TRAFAC class TrmE-Era-EngA-EngB-Septin-like GTPase superfamily. EngA (Der) GTPase family. As to quaternary structure, associates with the 50S ribosomal subunit.

GTPase that plays an essential role in the late steps of ribosome biogenesis. The chain is GTPase Der from Salmonella enteritidis PT4 (strain P125109).